The primary structure comprises 362 residues: Peptide chain release factor 1 (362 aa).

Glutamine 237 carries the N5-methylglutamine modification.

The protein belongs to the prokaryotic/mitochondrial release factor family. Post-translationally, methylated by PrmC. Methylation increases the termination efficiency of RF1.

The protein resides in the cytoplasm. Peptide chain release factor 1 directs the termination of translation in response to the peptide chain termination codons UAG and UAA. The polypeptide is Peptide chain release factor 1 (Legionella pneumophila (strain Paris)).